We begin with the raw amino-acid sequence, 286 residues long: Bifunctional protein FolD (286 aa).

Residues 165 to 167 (GRS) and serine 190 each bind NADP(+).

This sequence belongs to the tetrahydrofolate dehydrogenase/cyclohydrolase family. As to quaternary structure, homodimer.

The catalysed reaction is (6R)-5,10-methylene-5,6,7,8-tetrahydrofolate + NADP(+) = (6R)-5,10-methenyltetrahydrofolate + NADPH. It carries out the reaction (6R)-5,10-methenyltetrahydrofolate + H2O = (6R)-10-formyltetrahydrofolate + H(+). Its pathway is one-carbon metabolism; tetrahydrofolate interconversion. In terms of biological role, catalyzes the oxidation of 5,10-methylenetetrahydrofolate to 5,10-methenyltetrahydrofolate and then the hydrolysis of 5,10-methenyltetrahydrofolate to 10-formyltetrahydrofolate. This is Bifunctional protein FolD from Burkholderia lata (strain ATCC 17760 / DSM 23089 / LMG 22485 / NCIMB 9086 / R18194 / 383).